The sequence spans 386 residues: Succinate--CoA ligase [ADP-forming] subunit beta (386 aa).

Residues 9–244 (KDLLTSYAIP…PSQENVRDVL (236 aa)) form the ATP-grasp domain. ATP-binding positions include lysine 46, 53–55 (GRG), valine 102, and glutamate 107. 2 residues coordinate Mg(2+): asparagine 199 and aspartate 213. Substrate-binding positions include asparagine 264 and 321–323 (GIM).

Belongs to the succinate/malate CoA ligase beta subunit family. Heterotetramer of two alpha and two beta subunits. The cofactor is Mg(2+).

The catalysed reaction is succinate + ATP + CoA = succinyl-CoA + ADP + phosphate. It catalyses the reaction GTP + succinate + CoA = succinyl-CoA + GDP + phosphate. It functions in the pathway carbohydrate metabolism; tricarboxylic acid cycle; succinate from succinyl-CoA (ligase route): step 1/1. Succinyl-CoA synthetase functions in the citric acid cycle (TCA), coupling the hydrolysis of succinyl-CoA to the synthesis of either ATP or GTP and thus represents the only step of substrate-level phosphorylation in the TCA. The beta subunit provides nucleotide specificity of the enzyme and binds the substrate succinate, while the binding sites for coenzyme A and phosphate are found in the alpha subunit. In Chlamydia abortus (strain DSM 27085 / S26/3) (Chlamydophila abortus), this protein is Succinate--CoA ligase [ADP-forming] subunit beta.